The sequence spans 356 residues: Malate dehydrogenase, glyoxysomal (356 aa).

The N-terminal 36 residues, 1–36 (MQPIPDVNQRIARISAHLHPPKSQMEESSALRRANC), are a transit peptide targeting the glyoxysome. NAD(+) is bound by residues 51–57 (GAAGGIG) and aspartate 77. Substrate is bound by residues arginine 124 and arginine 130. NAD(+) contacts are provided by residues asparagine 137 and 160–162 (ISN). Substrate-binding residues include asparagine 162 and arginine 196. Histidine 220 (proton acceptor) is an active-site residue. Methionine 271 is a binding site for NAD(+).

The protein belongs to the LDH/MDH superfamily. MDH type 1 family. As to quaternary structure, homodimer.

Its subcellular location is the glyoxysome. The catalysed reaction is (S)-malate + NAD(+) = oxaloacetate + NADH + H(+). The protein is Malate dehydrogenase, glyoxysomal of Citrullus lanatus (Watermelon).